Consider the following 699-residue polypeptide: 4-alpha-glucanotransferase (699 aa).

Belongs to the disproportionating enzyme family.

The protein localises to the cytoplasm. The enzyme catalyses Transfers a segment of a (1-&gt;4)-alpha-D-glucan to a new position in an acceptor, which may be glucose or a (1-&gt;4)-alpha-D-glucan.. The protein is 4-alpha-glucanotransferase (malQ) of Haemophilus influenzae (strain ATCC 51907 / DSM 11121 / KW20 / Rd).